A 320-amino-acid chain; its full sequence is Glutathione synthetase (320 aa).

The region spanning 133 to 317 (KMYTLQFAAV…LGEKVICWLE (185 aa)) is the ATP-grasp domain. Residue 159–215 (LEEHGAAVLKPLGGKAGEGILFLDPGDRNFNSLVEISTQHGKEPVMVQRFLPEAKEG) coordinates ATP. Positions 288 and 290 each coordinate Mg(2+).

This sequence belongs to the prokaryotic GSH synthase family. Mg(2+) serves as cofactor. It depends on Mn(2+) as a cofactor.

The enzyme catalyses gamma-L-glutamyl-L-cysteine + glycine + ATP = glutathione + ADP + phosphate + H(+). The protein operates within sulfur metabolism; glutathione biosynthesis; glutathione from L-cysteine and L-glutamate: step 2/2. The sequence is that of Glutathione synthetase from Synechocystis sp. (strain ATCC 27184 / PCC 6803 / Kazusa).